A 1102-amino-acid polypeptide reads, in one-letter code: Probable DNA-directed RNA polymerase (1102 aa).

Residues D734, K804, and D980 contribute to the active site.

The protein belongs to the phage and mitochondrial RNA polymerase family.

It is found in the mitochondrion. It catalyses the reaction RNA(n) + a ribonucleoside 5'-triphosphate = RNA(n+1) + diphosphate. In terms of biological role, DNA-dependent RNA polymerase catalyzes the transcription of DNA into RNA using the four ribonucleoside triphosphates as substrates. This is Probable DNA-directed RNA polymerase from Agaricus bitorquis (Pavement mushroom).